A 134-amino-acid polypeptide reads, in one-letter code: Glycine cleavage system H protein (134 aa).

One can recognise a Lipoyl-binding domain in the interval 24-106 (TVRVGITDYA…YGAGWLLDIQ (83 aa)). An N6-lipoyllysine modification is found at Lys65.

This sequence belongs to the GcvH family. In terms of assembly, the glycine cleavage system is composed of four proteins: P, T, L and H. (R)-lipoate serves as cofactor.

Its function is as follows. The glycine cleavage system catalyzes the degradation of glycine. The H protein shuttles the methylamine group of glycine from the P protein to the T protein. In Mycobacterium bovis (strain ATCC BAA-935 / AF2122/97), this protein is Glycine cleavage system H protein.